Here is a 67-residue protein sequence, read N- to C-terminus: Photosystem II reaction center protein H (67 aa).

The helical transmembrane segment at 27–47 threads the bilayer; that stretch reads GAVPVMAFIGVLLLVFLVILL.

Belongs to the PsbH family. PSII is composed of 1 copy each of membrane proteins PsbA, PsbB, PsbC, PsbD, PsbE, PsbF, PsbH, PsbI, PsbJ, PsbK, PsbL, PsbM, PsbT, PsbX, PsbY, Psb30/Ycf12, peripheral proteins PsbO, CyanoQ (PsbQ), PsbU, PsbV and a large number of cofactors. It forms dimeric complexes.

The protein resides in the cellular thylakoid membrane. Its function is as follows. One of the components of the core complex of photosystem II (PSII), required for its stability and/or assembly. PSII is a light-driven water:plastoquinone oxidoreductase that uses light energy to abstract electrons from H(2)O, generating O(2) and a proton gradient subsequently used for ATP formation. It consists of a core antenna complex that captures photons, and an electron transfer chain that converts photonic excitation into a charge separation. This chain is Photosystem II reaction center protein H, found in Prochlorococcus marinus (strain MIT 9211).